Here is a 153-residue protein sequence, read N- to C-terminus: SKP1-like protein 5 (153 aa).

The interaction with the F-box domain of F-box proteins stretch occupies residues 90-153; sequence MMAANYLNIQ…IREENQWAFQ (64 aa).

The protein belongs to the SKP1 family. Part of a SCF (SKP1-cullin-F-box) protein ligase complex. Interacts with PP2A13. In terms of tissue distribution, restricted to inflorescences, especially in the inflorescence meristem (IM).

Its subcellular location is the nucleus. Its pathway is protein modification; protein ubiquitination. Functionally, involved in ubiquitination and subsequent proteasomal degradation of target proteins. Together with CUL1, RBX1 and a F-box protein, it forms a SCF E3 ubiquitin ligase complex. The functional specificity of this complex depends on the type of F-box protein. In the SCF complex, it serves as an adapter that links the F-box protein to CUL1. This is SKP1-like protein 5 (ASK5) from Arabidopsis thaliana (Mouse-ear cress).